The chain runs to 257 residues: Ribonuclease HII (257 aa).

The region spanning 72–257 (ERVAGIDEVG…FSPVQKILQA (186 aa)) is the RNase H type-2 domain. Residues Asp-78, Glu-79, and Asp-170 each coordinate a divalent metal cation.

The protein belongs to the RNase HII family. Mn(2+) serves as cofactor. It depends on Mg(2+) as a cofactor.

It is found in the cytoplasm. The enzyme catalyses Endonucleolytic cleavage to 5'-phosphomonoester.. In terms of biological role, endonuclease that specifically degrades the RNA of RNA-DNA hybrids. This is Ribonuclease HII from Levilactobacillus brevis (strain ATCC 367 / BCRC 12310 / CIP 105137 / JCM 1170 / LMG 11437 / NCIMB 947 / NCTC 947) (Lactobacillus brevis).